Here is a 569-residue protein sequence, read N- to C-terminus: 4-hydroxy-7-methoxy-3-oxo-3,4-dihydro-2H-1,4-benzoxazin-2-yl glucoside beta-D-glucosidase 1a, chloroplastic (569 aa).

Residues 1-50 constitute a chloroplast transit peptide; it reads MALLAAATLNPTTHLSLRSRAGRNSENLWLRSAASSQKSKGRFCNLTIRA. A beta-D-glucoside-binding positions include glutamine 92, histidine 194, and 239-240; that span reads NE. The Proton donor role is filled by glutamate 240. Cysteine 259 and cysteine 265 form a disulfide bridge. Residues tyrosine 383, glutamate 456, tryptophan 504, 511 to 512, and phenylalanine 520 contribute to the a beta-D-glucoside site; that span reads EW. Glutamate 456 functions as the Nucleophile in the catalytic mechanism.

This sequence belongs to the glycosyl hydrolase 1 family. In terms of assembly, homo- and heterohexamers. As to expression, expressed in young seedlings early after germination.

The protein resides in the plastid. Its subcellular location is the chloroplast. It catalyses the reaction Hydrolysis of terminal, non-reducing beta-D-glucosyl residues with release of beta-D-glucose.. It carries out the reaction DIMBOA beta-D-glucoside + H2O = DIMBOA + D-glucose. The enzyme catalyses DIBOA beta-D-glucoside + H2O = DIBOA + D-glucose. In terms of biological role, acts in defense of young plant parts against pests via the production of hydroxamic acids from hydroxamic acid glucosides. Enzymatic activity is highly correlated with plant growth. The preferred substrate is DIMBOA-beta-D-glucoside. This Triticum aestivum (Wheat) protein is 4-hydroxy-7-methoxy-3-oxo-3,4-dihydro-2H-1,4-benzoxazin-2-yl glucoside beta-D-glucosidase 1a, chloroplastic (GLU1A).